The sequence spans 469 residues: Diaminopimelate decarboxylase (469 aa).

Positions 1–23 are disordered; it reads MLSTEMPLPTTGSTLLKTPASPS. K93 is modified (N6-(pyridoxal phosphate)lysine). Pyridoxal 5'-phosphate contacts are provided by residues G279 and 321-324; that span reads EPGR. Residues R324, R361, and Y365 each coordinate substrate. Residue C392 is the Proton donor of the active site. Substrate contacts are provided by E393 and Y421. Y421 is a binding site for pyridoxal 5'-phosphate.

This sequence belongs to the Orn/Lys/Arg decarboxylase class-II family. LysA subfamily. As to quaternary structure, homodimer. The cofactor is pyridoxal 5'-phosphate.

The catalysed reaction is meso-2,6-diaminopimelate + H(+) = L-lysine + CO2. It participates in amino-acid biosynthesis; L-lysine biosynthesis via DAP pathway; L-lysine from DL-2,6-diaminopimelate: step 1/1. Functionally, specifically catalyzes the decarboxylation of meso-diaminopimelate (meso-DAP) to L-lysine. In Synechocystis sp. (strain ATCC 27184 / PCC 6803 / Kazusa), this protein is Diaminopimelate decarboxylase.